The primary structure comprises 105 residues: Plastocyanin (105 aa).

In terms of domain architecture, Plastocyanin-like spans 1–105 (ETYTVKLGSD…GMVGKITVAG (105 aa)). Cu(2+)-binding residues include H39, C89, H92, and M97.

This sequence belongs to the plastocyanin family. Cu(2+) is required as a cofactor.

Its subcellular location is the cellular thylakoid membrane. Participates in electron transfer between P700 and the cytochrome b6-f complex in photosystem I. In Anabaena variabilis, this protein is Plastocyanin (petE).